We begin with the raw amino-acid sequence, 122 residues long: Serum amyloid A-1 protein (122 aa).

A signal peptide spans 1 to 19; it reads MKLLSGLLLCSLVLGVSSQ. Positions 20–45 are important for amyloid formation; it reads RWFSFIGEATQGAWDMWRAYSDMREA. The interval 87 to 122 is disordered; that stretch reads MGHGAEDSMADQAANEWGRSGKDPNHFRPKGLPDKY. Over residues 105–122 the composition is skewed to basic and acidic residues; the sequence is RSGKDPNHFRPKGLPDKY.

It belongs to the SAA family. As to quaternary structure, homohexamer; dimer of trimers. Can form amyloid fibrils after partial proteolysis; the native, undenatured protein does not form amyloid fibrils (in vitro). Apolipoprotein of the HDL complex. Binds to heparin. As to expression, detected in liver.

The protein localises to the secreted. In terms of biological role, major acute phase protein. The polypeptide is Serum amyloid A-1 protein (SAA1) (Oryctolagus cuniculus (Rabbit)).